The chain runs to 178 residues: Cell wall-binding protein YwsB (178 aa).

Positions 1–30 are cleaved as a signal peptide; it reads MNKPTKLFSTLALAAGMTAAAAGGAGTIHA. SH3b domains follow at residues 47–111 and 116–178; these read IDSY…VKAA and TKTK…HMTK.

It is found in the secreted. Its subcellular location is the cell wall. With respect to regulation, increases in stationary phase in a strain lacking the WprA protease. This is Cell wall-binding protein YwsB (ywsB) from Bacillus subtilis (strain 168).